The following is a 337-amino-acid chain: Ornithine carbamoyltransferase (337 aa).

Carbamoyl phosphate is bound by residues S57–T60, Q84, R108, and H135–Q138. Residues N167, D231, and S235–M236 contribute to the L-ornithine site. Carbamoyl phosphate-binding positions include C272–L273 and R317.

It belongs to the aspartate/ornithine carbamoyltransferase superfamily. OTCase family.

The protein resides in the cytoplasm. The enzyme catalyses carbamoyl phosphate + L-ornithine = L-citrulline + phosphate + H(+). It functions in the pathway amino-acid degradation; L-arginine degradation via ADI pathway; carbamoyl phosphate from L-arginine: step 2/2. Its function is as follows. Reversibly catalyzes the transfer of the carbamoyl group from carbamoyl phosphate (CP) to the N(epsilon) atom of ornithine (ORN) to produce L-citrulline. The protein is Ornithine carbamoyltransferase of Streptococcus uberis (strain ATCC BAA-854 / 0140J).